A 351-amino-acid chain; its full sequence is Peroxisomal membrane protein PEX14 (351 aa).

The interval 54 to 75 (KARTGTVQASPSQQSVVPPRPP) is disordered. A compositionally biased stretch (low complexity) spans 60–70 (VQASPSQQSVV). The SH3-binding signature appears at 83 to 91 (APPLPERDW). The interval 243-351 (APQLSTPPSE…RGIPAWQLNA (109 aa)) is disordered. Residues 245 to 258 (QLSTPPSESTSRQS) are compositionally biased toward polar residues. Residues 283–293 (VLSREKDKDVN) show a composition bias toward basic and acidic residues. The segment covering 294 to 303 (SDSIAQYEQR) has biased composition (polar residues). Residues 320–334 (SASNGGSSTTSGVAG) show a composition bias toward low complexity.

It belongs to the peroxin-14 family. In terms of assembly, interacts with PEX13 (via SH3 domain); forming the PEX13-PEX14 docking complex. Interacts with PEX5 (via WxxxF/Y motifs).

The protein resides in the peroxisome membrane. Component of the PEX13-PEX14 docking complex, a translocon channel that specifically mediates the import of peroxisomal cargo proteins bound to PEX5 receptor. The PEX13-PEX14 docking complex forms a large import pore which can be opened to a diameter of about 9 nm. Mechanistically, PEX5 receptor along with cargo proteins associates with the PEX14 subunit of the PEX13-PEX14 docking complex in the cytosol, leading to the insertion of the receptor into the organelle membrane with the concomitant translocation of the cargo into the peroxisome matrix. The protein is Peroxisomal membrane protein PEX14 of Pichia angusta (Yeast).